The sequence spans 152 residues: Deoxyuridine 5'-triphosphate nucleotidohydrolase (152 aa).

Residues 71 to 73, asparagine 84, 88 to 90, and methionine 98 each bind substrate; these read RSG and LVD.

Belongs to the dUTPase family. Mg(2+) serves as cofactor.

The catalysed reaction is dUTP + H2O = dUMP + diphosphate + H(+). Its pathway is pyrimidine metabolism; dUMP biosynthesis; dUMP from dCTP (dUTP route): step 2/2. Functionally, this enzyme is involved in nucleotide metabolism: it produces dUMP, the immediate precursor of thymidine nucleotides and it decreases the intracellular concentration of dUTP so that uracil cannot be incorporated into DNA. The chain is Deoxyuridine 5'-triphosphate nucleotidohydrolase from Shewanella oneidensis (strain ATCC 700550 / JCM 31522 / CIP 106686 / LMG 19005 / NCIMB 14063 / MR-1).